We begin with the raw amino-acid sequence, 399 residues long: Phosphoglycerate kinase (399 aa).

Substrate-binding positions include 21-23 (DFN), Arg36, 59-62 (HLGR), Arg120, and Arg158. Residues Lys209, Gly297, Glu328, and 355–358 (GGDS) each bind ATP.

This sequence belongs to the phosphoglycerate kinase family. As to quaternary structure, monomer.

It localises to the cytoplasm. The enzyme catalyses (2R)-3-phosphoglycerate + ATP = (2R)-3-phospho-glyceroyl phosphate + ADP. Its pathway is carbohydrate degradation; glycolysis; pyruvate from D-glyceraldehyde 3-phosphate: step 2/5. This Streptococcus thermophilus (strain CNRZ 1066) protein is Phosphoglycerate kinase.